Consider the following 122-residue polypeptide: Zein-alpha B49 (122 aa).

The protein belongs to the zein family.

Zeins are major seed storage proteins. The sequence is that of Zein-alpha B49 from Zea mays (Maize).